The chain runs to 472 residues: Proline--tRNA ligase (472 aa).

It belongs to the class-II aminoacyl-tRNA synthetase family. ProS type 3 subfamily. Homodimer.

It localises to the cytoplasm. The catalysed reaction is tRNA(Pro) + L-proline + ATP = L-prolyl-tRNA(Pro) + AMP + diphosphate. Catalyzes the attachment of proline to tRNA(Pro) in a two-step reaction: proline is first activated by ATP to form Pro-AMP and then transferred to the acceptor end of tRNA(Pro). In Ureaplasma urealyticum serovar 10 (strain ATCC 33699 / Western), this protein is Proline--tRNA ligase.